The following is a 113-amino-acid chain: Photosystem II reaction center Psb28 protein (113 aa).

The protein belongs to the Psb28 family. Part of the photosystem II complex.

It is found in the cellular thylakoid membrane. The polypeptide is Photosystem II reaction center Psb28 protein (Prochlorococcus marinus (strain NATL2A)).